Consider the following 504-residue polypeptide: ATP synthase subunit alpha (504 aa).

170–177 is an ATP binding site; the sequence is GDRQTGKT.

This sequence belongs to the ATPase alpha/beta chains family. As to quaternary structure, F-type ATPases have 2 components, CF(1) - the catalytic core - and CF(0) - the membrane proton channel. CF(1) has five subunits: alpha(3), beta(3), gamma(1), delta(1), epsilon(1). CF(0) has four main subunits: a, b, b' and c.

It is found in the cellular thylakoid membrane. It catalyses the reaction ATP + H2O + 4 H(+)(in) = ADP + phosphate + 5 H(+)(out). Functionally, produces ATP from ADP in the presence of a proton gradient across the membrane. The alpha chain is a regulatory subunit. This Prochlorococcus marinus (strain MIT 9211) protein is ATP synthase subunit alpha.